Reading from the N-terminus, the 244-residue chain is High frequency lysogenization protein HflD homolog (244 aa).

The protein belongs to the HflD family.

It localises to the cytoplasm. Its subcellular location is the cell inner membrane. The sequence is that of High frequency lysogenization protein HflD homolog from Acinetobacter baumannii (strain ATCC 17978 / DSM 105126 / CIP 53.77 / LMG 1025 / NCDC KC755 / 5377).